The primary structure comprises 125 residues: Protein ApaG (125 aa).

Positions Met1–Asn125 constitute an ApaG domain.

The sequence is that of Protein ApaG from Edwardsiella ictaluri (strain 93-146).